A 502-amino-acid chain; its full sequence is Glycogen synthase (502 aa).

Lysine 24 contacts ADP-alpha-D-glucose.

The protein belongs to the glycosyltransferase 1 family. Bacterial/plant glycogen synthase subfamily.

It carries out the reaction [(1-&gt;4)-alpha-D-glucosyl](n) + ADP-alpha-D-glucose = [(1-&gt;4)-alpha-D-glucosyl](n+1) + ADP + H(+). It participates in glycan biosynthesis; glycogen biosynthesis. Synthesizes alpha-1,4-glucan chains using ADP-glucose. This is Glycogen synthase from Nitrosomonas eutropha (strain DSM 101675 / C91 / Nm57).